Here is a 976-residue protein sequence, read N- to C-terminus: Probable outer membrane protein PmpA (976 aa).

An N-terminal signal peptide occupies residues 1–50 (MNQVIKTIALCYQKYISRASNKTFSIHNTLSLSLLPKCLLGSLIIYTSHA). The Autotransporter domain maps to 671–976 (GNAIPNSLWS…SLSCGGYVGF (306 aa)).

This sequence belongs to the PMP outer membrane protein family.

The protein localises to the secreted. It is found in the cell wall. Its subcellular location is the cell outer membrane. The chain is Probable outer membrane protein PmpA (pmpA) from Chlamydia muridarum (strain MoPn / Nigg).